The sequence spans 225 residues: Protein-L-isoaspartate O-methyltransferase (225 aa).

The active site involves Ser-75.

The protein belongs to the methyltransferase superfamily. L-isoaspartyl/D-aspartyl protein methyltransferase family.

It localises to the cytoplasm. It catalyses the reaction [protein]-L-isoaspartate + S-adenosyl-L-methionine = [protein]-L-isoaspartate alpha-methyl ester + S-adenosyl-L-homocysteine. Catalyzes the methyl esterification of L-isoaspartyl residues in peptides and proteins that result from spontaneous decomposition of normal L-aspartyl and L-asparaginyl residues. It plays a role in the repair and/or degradation of damaged proteins. This chain is Protein-L-isoaspartate O-methyltransferase, found in Stenotrophomonas maltophilia (strain R551-3).